The sequence spans 647 residues: Threonine--tRNA ligase (647 aa).

The TGS domain maps to 1 to 61 (MIKITFPDGA…EEDGSIEIVT (61 aa)). The tract at residues 240–538 (DHRKLGKELD…LIETYKGAFP (299 aa)) is catalytic. Zn(2+) contacts are provided by Cys-334, His-385, and His-515.

Belongs to the class-II aminoacyl-tRNA synthetase family. Homodimer. Requires Zn(2+) as cofactor.

The protein localises to the cytoplasm. It carries out the reaction tRNA(Thr) + L-threonine + ATP = L-threonyl-tRNA(Thr) + AMP + diphosphate + H(+). Catalyzes the attachment of threonine to tRNA(Thr) in a two-step reaction: L-threonine is first activated by ATP to form Thr-AMP and then transferred to the acceptor end of tRNA(Thr). Also edits incorrectly charged L-seryl-tRNA(Thr). In Streptococcus pyogenes serotype M28 (strain MGAS6180), this protein is Threonine--tRNA ligase.